A 701-amino-acid chain; its full sequence is MGLPEERRKSGSGSRAREETGAEGRVRGWSPPPEVRRSAHVPSLQRYRELHRRSVEEPREFWGNIAKEFYWKTACPGPFLQYNFDVTKGKIFTEWMKGATTNICYNVLDRNVHEKKLGDKVAFYWEGNEPGETTKITYRELLVQVCQFSNVLRKQGIQKGDRVAIYMPMILELVVAMLACARLGALHSIVFAGFSAESLCERILDSSCCLLITTDAFYRGEKLVNLKELADESLEKCREKGFPVRCCIVVKHLGRAELGMNDSPSQSPPVKRPCPDVQICWNEGVDLWWHELMQQAGDECEPEWCDAEDPLFILYTSGSTGKPKGVVHTIGGYMLYVATTFKYVFDFHPEDVFWCTADIGWITGHSYVTYGPLANGATSVLFEGIPTYPDEGRLWSIVDKYKVTKFYTAPTAIRMLMKFGDDPVTKHSRASLQVLGTVGEPINPEAWLWYHRVVGSQRCPIVDTFWQTETGGHMLTPLPGATPMKPGSASFPFFGVAPAILNESGEELEGEAEGYLVFKQPWPGIMRTVYGNHTRFETTYFKKFPGYYVTGDGCRRDQDGYYWITGRIDDMLNVSGHLLSTAEVESALVEHEAVAEAAVVGHPHPVKGECLYCFVTLCDGHTFSPTLTEELKKQIREKIGPIATPDYIQNAPGLPKTRSGKIMRRVLRKIAQNDHDLGDTSTVADPSVINHLFSHRCLTTQ.

Basic and acidic residues predominate over residues 1 to 26 (MGLPEERRKSGSGSRAREETGAEGRV). Positions 1 to 37 (MGLPEERRKSGSGSRAREETGAEGRVRGWSPPPEVRR) are disordered. The tract at residues 1 to 107 (MGLPEERRKS…GATTNICYNV (107 aa)) is interaction with TFEB. S30 carries the post-translational modification Phosphoserine. Residue 219–222 (RGEK) participates in CoA binding. Residues S263, S265, and S267 each carry the phosphoserine modification. T363 contributes to the CoA binding site. The residue at position 418 (K418) is an N6-acetyllysine. ATP-binding positions include 439 to 441 (GEP), 463 to 468 (DTFWQT), D552, and R567. CoA contacts are provided by S575 and R636. Residues 656–668 (KTRSGKIMRRVLR) carry the Nuclear localization signal motif. S659 carries the post-translational modification Phosphoserine; by AMPK. K661 is modified (N6-acetyllysine).

This sequence belongs to the ATP-dependent AMP-binding enzyme family. Monomer. Interacts with TFEB. AMPK-mediated phosphorylated form at Ser-659 interacts with KPNA1; this interaction results in nuclear translocation of ACSS2. Interacts with the 'Thr-172' phosphorylated form of PRKAA2. Interacts with CREBBP. In terms of processing, reversibly acetylated at Lys-661. The acetyl-CoA synthase activity is inhibited by acetylation and activated by deacetylation mediated by the deacetylases SIRT1 and SIRT3. Expressed in the hippocampus.

Its subcellular location is the cytoplasm. The protein resides in the cytosol. It is found in the nucleus. The enzyme catalyses acetate + ATP + CoA = acetyl-CoA + AMP + diphosphate. The catalysed reaction is propanoate + ATP + CoA = propanoyl-CoA + AMP + diphosphate. Its activity is regulated as follows. Inhibited by acetylation at Lys-661 and activated by deacetylation mediated by the deacetylases SIRT1 and SIRT3. Catalyzes the synthesis of acetyl-CoA from short-chain fatty acids. Acetate is the preferred substrate but can also utilize propionate with a much lower affinity. Nuclear ACSS2 promotes glucose deprivation-induced lysosomal biogenesis and autophagy, tumor cell survival and brain tumorigenesis. Glucose deprivation results in AMPK-mediated phosphorylation of ACSS2 leading to its translocation to the nucleus where it binds to TFEB and locally produces acetyl-CoA for histone acetylation in the promoter regions of TFEB target genes thereby activating their transcription. The regulation of genes associated with autophagy and lysosomal activity through ACSS2 is important for brain tumorigenesis and tumor survival. Acts as a chromatin-bound transcriptional coactivator that up-regulates histone acetylation and expression of neuronal genes. Can be recruited to the loci of memory-related neuronal genes to maintain a local acetyl-CoA pool, providing the substrate for histone acetylation and promoting the expression of specific genes, which is essential for maintaining long-term spatial memory. The protein is Acetyl-coenzyme A synthetase, cytoplasmic (Acss2) of Mus musculus (Mouse).